A 448-amino-acid chain; its full sequence is Beta-alanine--pyruvate aminotransferase (448 aa).

Trp-61 serves as a coordination point for substrate. Residue 120-121 (GS) coordinates pyridoxal 5'-phosphate. The residue at position 288 (Lys-288) is an N6-(pyridoxal phosphate)lysine. Thr-327 contributes to the pyridoxal 5'-phosphate binding site. Substrate contacts are provided by Arg-414 and Gln-421.

This sequence belongs to the class-III pyridoxal-phosphate-dependent aminotransferase family. As to quaternary structure, homotetramer. Requires pyridoxal 5'-phosphate as cofactor.

It catalyses the reaction 3-oxopropanoate + L-alanine = beta-alanine + pyruvate. With respect to regulation, inhibited by gabaculine (5-amino-1,3-cyclohexadienylcarboxylic acid). Functionally, involved in the degradation of beta-alanine. Catalyzes the transfer of the amino group from beta-alanine to pyruvate to yield L-alanine and 3-oxopropanoate. It can also accept both 4-aminobutyrate and (S)-alpha-methylbenzylamine (MBA) as amino-group donors in the presence of pyruvate as an amine acceptor. The chain is Beta-alanine--pyruvate aminotransferase (bauA) from Pseudomonas aeruginosa (strain ATCC 15692 / DSM 22644 / CIP 104116 / JCM 14847 / LMG 12228 / 1C / PRS 101 / PAO1).